The chain runs to 715 residues: Methionine--tRNA ligase (715 aa).

The short motif at 17–27 (PYANGPIHLGH) is the 'HIGH' region element. Zn(2+) contacts are provided by cysteine 148, cysteine 151, cysteine 161, and cysteine 164. The 'KMSKS' region motif lies at 359-363 (KMSKS). Position 362 (lysine 362) interacts with ATP. The tRNA-binding domain occupies 614-715 (DLSKVELRVG…KDAKPGDRLK (102 aa)).

It belongs to the class-I aminoacyl-tRNA synthetase family. MetG type 1 subfamily. As to quaternary structure, homodimer. It depends on Zn(2+) as a cofactor.

The protein resides in the cytoplasm. The catalysed reaction is tRNA(Met) + L-methionine + ATP = L-methionyl-tRNA(Met) + AMP + diphosphate. Is required not only for elongation of protein synthesis but also for the initiation of all mRNA translation through initiator tRNA(fMet) aminoacylation. The protein is Methionine--tRNA ligase of Leptospira interrogans serogroup Icterohaemorrhagiae serovar Lai (strain 56601).